A 1254-amino-acid chain; its full sequence is DNA-directed RNA polymerase subunit beta' (1254 aa).

C59, C61, C76, and C79 together coordinate Zn(2+). Residues D501, D503, and D505 each contribute to the Mg(2+) site. The Zn(2+) site is built by C871, C946, C953, and C956.

The protein belongs to the RNA polymerase beta' chain family. The RNAP catalytic core consists of 2 alpha, 1 beta, 1 beta' and 1 omega subunit. When a sigma factor is associated with the core the holoenzyme is formed, which can initiate transcription. It depends on Mg(2+) as a cofactor. Zn(2+) serves as cofactor.

The enzyme catalyses RNA(n) + a ribonucleoside 5'-triphosphate = RNA(n+1) + diphosphate. Functionally, DNA-dependent RNA polymerase catalyzes the transcription of DNA into RNA using the four ribonucleoside triphosphates as substrates. The sequence is that of DNA-directed RNA polymerase subunit beta' from Mesoplasma florum (strain ATCC 33453 / NBRC 100688 / NCTC 11704 / L1) (Acholeplasma florum).